A 178-amino-acid polypeptide reads, in one-letter code: Natriuretic and helokinestatin peptides (178 aa).

Residues 1–25 form the signal peptide; sequence MNPRLACSTWLPLLLVLFTLDQGRA. 5 propeptides span residues 26-58, 69-73, 85-89, 103-112, and 123-146; these read NPVE…SEEN, ASDEN, ASEQKGPPFN, and AANE…RNKR. Disordered stretches follow at residues 69-107 and 135-155; these read ASDE…SEQK and RSFE…GCFG. A disulfide bridge links Cys153 with Cys169.

The protein in the C-terminal section; belongs to the natriuretic peptide family. In terms of tissue distribution, expressed by the venom gland.

Its subcellular location is the secreted. Helokinestatins antagonize the vasodilatory actions of bradykinin at the B2 bradykinin receptor (BDKRB2), with helokinestatin-1 being the most potent antagonist. Functionally, exhibits hypotensive and vasodepressor activities, possibly by targeting natriuretic peptide receptors NPR1 and NPR2. The sequence is that of Natriuretic and helokinestatin peptides from Heloderma suspectum cinctum (Banded Gila monster).